The primary structure comprises 300 residues: Nuclear egress protein 1 (300 aa).

The CCCH-type zinc finger occupies 90–217; that stretch reads CLSLSGMGYY…YIVFPGKALH (128 aa).

This sequence belongs to the herpesviridae NEC1 protein family. Forms a heterohexameric complex with NEC2. Interacts with capsid vertex specific component 2/CVC2; this interaction directs the capsid to the host inner nuclear membrane to initiate budding. Phosphorylated at serine residues in the N-terminus. This phosphorylation regulates the localization within the inner nuclear membrane.

Its subcellular location is the host nucleus inner membrane. Plays an essential role in virion nuclear egress, the first step of virion release from infected cell. Within the host nucleus, NEC1 interacts with the newly formed capsid through the vertexes and directs it to the inner nuclear membrane by associating with NEC2. Induces the budding of the capsid at the inner nuclear membrane as well as its envelopment into the perinuclear space. There, the NEC1/NEC2 complex promotes the fusion of the enveloped capsid with the outer nuclear membrane and the subsequent release of the viral capsid into the cytoplasm where it will reach the secondary budding sites in the host Golgi or trans-Golgi network. The protein is Nuclear egress protein 1 of Gallid herpesvirus 2 (strain Chicken/Md5/ATCC VR-987) (GaHV-2).